We begin with the raw amino-acid sequence, 434 residues long: 4-hydroxyphenylpyruvate dioxygenase (434 aa).

A disordered region spans residues 1–21 (MPPTPTTPAATGAAAAVTPEH). Low complexity predominate over residues 7–19 (TPAATGAAAAVTP). VOC domains follow at residues 41 to 192 (SFHH…FLPG) and 208 to 368 (RFDH…IFTK). Fe cation-binding residues include His-211, His-293, and Glu-379.

The protein belongs to the 4HPPD family. Fe cation serves as cofactor.

It localises to the cytoplasm. The enzyme catalyses 3-(4-hydroxyphenyl)pyruvate + O2 = homogentisate + CO2. The protein operates within amino-acid degradation; L-phenylalanine degradation; acetoacetate and fumarate from L-phenylalanine: step 3/6. Its pathway is cofactor biosynthesis; prenylquinone biosynthesis. In Hordeum vulgare (Barley), this protein is 4-hydroxyphenylpyruvate dioxygenase.